The sequence spans 88 residues: Small ribosomal subunit protein bS16 (88 aa).

The protein belongs to the bacterial ribosomal protein bS16 family.

In Mycoplasmopsis pulmonis (strain UAB CTIP) (Mycoplasma pulmonis), this protein is Small ribosomal subunit protein bS16.